Consider the following 76-residue polypeptide: Small ribosomal subunit protein bS18 (76 aa).

It belongs to the bacterial ribosomal protein bS18 family. As to quaternary structure, part of the 30S ribosomal subunit. Forms a tight heterodimer with protein bS6.

Its function is as follows. Binds as a heterodimer with protein bS6 to the central domain of the 16S rRNA, where it helps stabilize the platform of the 30S subunit. The chain is Small ribosomal subunit protein bS18 from Marinobacter nauticus (strain ATCC 700491 / DSM 11845 / VT8) (Marinobacter aquaeolei).